A 125-amino-acid polypeptide reads, in one-letter code: SOSS complex subunit C homolog (125 aa).

The disordered stretch occupies residues 43–77 (MPSPQLLGQPTVAPEFLPQGVGLPTNATPPRSAFN). The span at 67 to 77 (TNATPPRSAFN) shows a compositional bias: polar residues.

Belongs to the SOSS-C family.

The polypeptide is SOSS complex subunit C homolog (Drosophila persimilis (Fruit fly)).